The primary structure comprises 398 residues: DJ-1 protein homolog E (398 aa).

2 PfpI endopeptidase domains span residues 7–199 (KSAL…ESLG) and 210–393 (ASVL…TALG).

This sequence belongs to the peptidase C56 family. In terms of assembly, homotrimer. As to expression, expressed in roots and cauline leaves.

In terms of biological role, may be involved in oxidative stress response. This is DJ-1 protein homolog E (DJ1E) from Arabidopsis thaliana (Mouse-ear cress).